The following is a 401-amino-acid chain: MFRSNLEGSGAAAVGVANPPSLAQSGKIFQLQDNFSAFHARGGLNILGLQDMYLDTSGANSSATLSPPITPVTPDPSTSAQSTHFPFLADSAATANSLLMQRQYHYHLLLQQQQQLAMAQHQLALAASAAAASASHQQTDEIARSLKIFAQVTTGAAENAAGSMQDVMQEFATNGYASDDLGRMSYGSAPPQVQMPPQQQHQQQQGLHLPLGRNPAQLQTNGGNLMPIPLATHWLNNYREHLNNVWRNMSYIPAAPNTMGLQAQTAATVSTNLGVGMGLGLPVQGEQLRGASNSSNNNNNNNKVYKRYNSKAKEISRHCVFCENNNEPEAVINSHSVRDNFNRVLCPKLRTYVCPICGASGDSAHTIKYCPKKPIITMEDAIKAESFRLAKSSYYKQQMKV.

Positions 181-207 (LGRMSYGSAPPQVQMPPQQQHQQQQGL) are disordered. The span at 190–205 (PPQVQMPPQQQHQQQQ) shows a compositional bias: low complexity. Residues 318–372 (HCVFCENNNEPEAVINSHSVRDNFNRVLCPKLRTYVCPICGASGDSAHTIKYCPK) form a Nanos-type zinc finger. Positions 319, 322, 335, 346, 354, 357, 365, and 370 each coordinate Zn(2+). Short sequence motifs (C2HC) lie at residues 319–346 (CVFCENNNEPEAVINSHSVRDNFNRVLC) and 354–370 (CPICGASGDSAHTIKYC).

It belongs to the nanos family. In terms of assembly, interacts with pum and brat. Interacts with cup. Interacts with mei-P26; possibly involved in regulation of brat levels. Interacts with wh; may be involved in mei-P26-dependent derepression of the BMP signaling pathway. Acts via the formation of a quaternary complex composed of pum, nanos, brat and the 3'-UTR mRNA of hb. Binds RNA with no specificity. Posterior part of the embryo. While the transcript is present throughout the embryo, nanos translation is controlled by smg, and the protein is found in pole plasm and pole cells. In the female ovary expressed in germline stem cells, precystoblasts and in maturing cystoblasts; in early cystoblasts expression is post-transcriptionally repressed by bam in a 3'UTR-dependent manner.

It is found in the cytoplasm. The protein resides in the cytoplasmic ribonucleoprotein granule. Maternal RNA-binding protein that is required for germ cells proliferation and self-renewal. Acts by forming a complex with pum and brat that regulates translation and mRNA stability. The complex binds to the Nanos Response Element (NRE), a 16 bp sequence in the hb mRNA 3'-UTR and prevents its translation. Controls posterior development. Rescuing factor for the abdominal defect of posterior group mutants. The other posterior group genes are not required for nanos function but rather play a role in localization or distribution of nanos protein. The chain is Protein nanos from Drosophila melanogaster (Fruit fly).